Consider the following 131-residue polypeptide: Profilin (131 aa).

It belongs to the profilin family. In terms of assembly, occurs in many kinds of cells as a complex with monomeric actin in a 1:1 ratio.

It localises to the cytoplasm. The protein localises to the cytoskeleton. Binds to actin and affects the structure of the cytoskeleton. At high concentrations, profilin prevents the polymerization of actin, whereas it enhances it at low concentrations. By binding to PIP2, it inhibits the formation of IP3 and DG. This chain is Profilin, found in Prunus persica (Peach).